The primary structure comprises 245 residues: 3-deoxy-manno-octulosonate cytidylyltransferase (245 aa).

It belongs to the KdsB family.

It localises to the cytoplasm. The enzyme catalyses 3-deoxy-alpha-D-manno-oct-2-ulosonate + CTP = CMP-3-deoxy-beta-D-manno-octulosonate + diphosphate. The protein operates within nucleotide-sugar biosynthesis; CMP-3-deoxy-D-manno-octulosonate biosynthesis; CMP-3-deoxy-D-manno-octulosonate from 3-deoxy-D-manno-octulosonate and CTP: step 1/1. It participates in bacterial outer membrane biogenesis; lipopolysaccharide biosynthesis. In terms of biological role, activates KDO (a required 8-carbon sugar) for incorporation into bacterial lipopolysaccharide in Gram-negative bacteria. This is 3-deoxy-manno-octulosonate cytidylyltransferase from Desulfatibacillum aliphaticivorans.